A 711-amino-acid chain; its full sequence is Long-chain-fatty-acid--CoA ligase 4 (711 aa).

The chain crosses the membrane as a helical; Signal-anchor for type III membrane protein span at residues 8-28 (LTIVLLPVHLLITIYSALIFI). Residues 29 to 711 (PWYFLTNAKK…KDIERMYGGK (683 aa)) lie on the Cytoplasmic side of the membrane. Position 447 is a phosphoserine (S447).

It belongs to the ATP-dependent AMP-binding enzyme family. Requires Mg(2+) as cofactor.

Its subcellular location is the mitochondrion outer membrane. The protein resides in the peroxisome membrane. It localises to the microsome membrane. It is found in the endoplasmic reticulum membrane. The protein localises to the cell membrane. It carries out the reaction a long-chain fatty acid + ATP + CoA = a long-chain fatty acyl-CoA + AMP + diphosphate. The enzyme catalyses (5Z,8Z,11Z,14Z)-eicosatetraenoate + ATP + CoA = (5Z,8Z,11Z,14Z)-eicosatetraenoyl-CoA + AMP + diphosphate. It catalyses the reaction 15-hydroxy-(5Z,8Z,11Z,13E)-eicosatetraenoate + ATP + CoA = 15-hydroxy-(5Z,8Z,11Z,13E)-eicosatetraenoyl-CoA + AMP + diphosphate. The catalysed reaction is 12-hydroxy-(5Z,8Z,10E,14Z)-eicosatetraenoate + ATP + CoA = 12-hydroxy-(5Z,8Z,10E,14Z)-eicosatetraenoyl-CoA + AMP + diphosphate. It carries out the reaction 5-hydroxy-(6E,8Z,11Z,14Z)-eicosatetraenoate + ATP + CoA = 5-hydroxy-(6E,8Z,11Z,14Z)-eicosatetraenoyl-CoA + AMP + diphosphate. The enzyme catalyses 5,6-epoxy-(8Z,11Z,14Z)-eicosatrienoate + ATP + CoA = 5,6-epoxy-(8Z,11Z,14Z)-eicosatrienoyl-CoA + AMP + diphosphate. It catalyses the reaction 14,15-epoxy-(5Z,8Z,11Z)-eicosatrienoate + ATP + CoA = 14,15-epoxy-(5Z,8Z,11Z)-eicosatrienoyl-CoA + AMP + diphosphate. The catalysed reaction is 11,12-epoxy-(5Z,8Z,14Z)-eicosatrienoate + ATP + CoA = 11,12-epoxy-(5Z,8Z,14Z)-eicosatrienoyl-CoA + AMP + diphosphate. It carries out the reaction 8,9-epoxy-(5Z,11Z,14Z)-eicosatrienoate + ATP + CoA = 8,9-epoxy-(5Z,11Z,14Z)-eicosatrienoyl-CoA + AMP + diphosphate. The enzyme catalyses hexadecanoate + ATP + CoA = hexadecanoyl-CoA + AMP + diphosphate. It catalyses the reaction (E)-hexadec-2-enoate + ATP + CoA = (2E)-hexadecenoyl-CoA + AMP + diphosphate. With respect to regulation, both triacsin C and rosiglitazone inhibit arachidonoyl-CoA ligase activity. Catalyzes the conversion of long-chain fatty acids to their active form acyl-CoA for both synthesis of cellular lipids, and degradation via beta-oxidation. Preferentially activates arachidonate and eicosapentaenoate as substrates. Preferentially activates 8,9-EET &gt; 14,15-EET &gt; 5,6-EET &gt; 11,12-EET. Modulates glucose-stimulated insulin secretion by regulating the levels of unesterified EETs. Modulates prostaglandin E2 secretion. This is Long-chain-fatty-acid--CoA ligase 4 (Acsl4) from Rattus norvegicus (Rat).